Reading from the N-terminus, the 128-residue chain is Large ribosomal subunit protein bL21 (128 aa).

Residues 104-128 (GKTPTVGPRPKKEKVVEPAEGEGDH) form a disordered region. Basic and acidic residues predominate over residues 116-128 (EKVVEPAEGEGDH).

This sequence belongs to the bacterial ribosomal protein bL21 family. Part of the 50S ribosomal subunit. Contacts protein L20.

Its function is as follows. This protein binds to 23S rRNA in the presence of protein L20. This chain is Large ribosomal subunit protein bL21, found in Nitrobacter hamburgensis (strain DSM 10229 / NCIMB 13809 / X14).